A 1060-amino-acid chain; its full sequence is RNA-binding protein 27 (1060 aa).

Composition is skewed to basic and acidic residues over residues 91–102 and 124–143; these read LVQEKEEIKEEV and TRSESSERRTREKKREDGKW. Disordered stretches follow at residues 91 to 143 and 162 to 235; these read LVQE…DGKW and WRRG…GAQS. Basic residues predominate over residues 165-185; the sequence is GRSKSRSKSRGLSRSRSRSRG. A compositionally biased stretch (basic and acidic residues) spans 186–211; sequence RSKDRDPNRNVEHRERSKFKSERNDL. Over residues 225-235 the composition is skewed to polar residues; that stretch reads SSEQYSSGAQS. The segment at 273 to 301 adopts a C3H1-type zinc-finger fold; sequence LPPKRRCRDYDERGFCVLGDLCQFDHGND. Composition is skewed to pro residues over residues 319 to 356 and 371 to 384; these read PPPGLPPPPPPGMLMPPMPGPGPGPGPGPGPGPGPGPG and QPPPSVVLPIPRPP. Residues 319-412 are disordered; that stretch reads PPPGLPPPPP…PNLASVGTRL (94 aa). Residues 386-402 show a composition bias toward polar residues; that stretch reads TQSSLINSRDQPGTSAV. Phosphothreonine is present on T447. R455 is modified (omega-N-methylarginine). Residues 565 to 592 are disordered; that stretch reads MSGLEGPLTKKPWLGKQGNNNQNKPGFL. The span at 579 to 588 shows a compositional bias: low complexity; sequence GKQGNNNQNK. An RRM domain is found at 600–674; sequence TKLEVKKIPQ…RFIRVLWHRE (75 aa). Residues 809–886 adopt a coiled-coil conformation; sequence VQEVLKKKQE…KDELKTSSAV (78 aa). S927 carries the post-translational modification Phosphoserine. 2 disordered regions span residues 940 to 968 and 1006 to 1060; these read PVGRGKTMSSQGRGRGRGRGGRGRGSLNH and DRRL…SWRR. Phosphoserine is present on residues S1012 and S1020. Residues 1024-1053 are compositionally biased toward acidic residues; that stretch reads ETEEEEVKEEETETSDLFLPDDDDEDEDEY.

Its subcellular location is the cytoplasm. It localises to the nucleus speckle. Functionally, may be involved in the turnover of nuclear polyadenylated (pA+) RNA. The chain is RNA-binding protein 27 from Homo sapiens (Human).